Consider the following 366-residue polypeptide: Galactoside alpha-(1,2)-fucosyltransferase 1 (366 aa).

The Cytoplasmic portion of the chain corresponds to 1-8 (MWPRSHRH). A helical; Signal-anchor for type II membrane protein transmembrane segment spans residues 9 to 25 (LCLAFLLVCVLSAISFL). Residues 26–366 (IHFHQDSIRH…LSPLWPLAEP (341 aa)) are Lumenal-facing. 3 N-linked (GlcNAc...) asparagine glycosylation sites follow: N66, N302, and N328.

Belongs to the glycosyltransferase 11 family.

It localises to the golgi apparatus. It is found in the golgi stack membrane. It carries out the reaction a beta-D-galactosyl-(1-&gt;4)-N-acetyl-beta-D-glucosaminyl derivative + GDP-beta-L-fucose = an alpha-L-Fuc-(1-&gt;2)-beta-D-Gal-(1-&gt;4)-beta-D-GlcNAc derivative + GDP + H(+). The enzyme catalyses a ganglioside GA1 + GDP-beta-L-fucose = a ganglioside Fuc-GA1 + GDP + H(+). It catalyses the reaction a beta-D-Gal-(1-&gt;3)-beta-D-GlcNAc-(1-&gt;3)-beta-D-Gal-(1-&gt;4)-beta-D-Glc-(1&lt;-&gt;1')-Cer(d18:1(4E)) + GDP-beta-L-fucose = alpha-L-fucosyl-(1-&gt;2)- beta-D-galactosyl-(1-&gt;3)-N-acetyl-beta-D-glucosaminyl-(1-&gt;3)-beta-D-galactosyl-(1-&gt;4)-beta-D-glucosyl-(1&lt;-&gt;1')-N-acylsphing-4-enine + GDP + H(+). The catalysed reaction is a neolactoside nLc4Cer(d18:1(4E)) + GDP-beta-L-fucose = a neolactoside IV(2)-alpha-Fuc-nLc4Cer(d18:1(4E)) + GDP + H(+). It carries out the reaction a ganglioside GM1 + GDP-beta-L-fucose = a ganglioside Fuc-GM1 + GDP + H(+). The enzyme catalyses beta-D-galactosyl-(1-&gt;3)-N-acetyl-D-galactosamine + GDP-beta-L-fucose = alpha-L-fucosyl-(1-&gt;2)-beta-D-galactosyl-(1-&gt;3)-N-acetyl-D-galactosamine + GDP + H(+). Its pathway is protein modification; protein glycosylation. Catalyzes the transfer of L-fucose, from a guanosine diphosphate-beta-L-fucose, to the terminal galactose residue of glycoconjugates through an alpha(1,2) linkage leading to H antigen synthesis that is an intermediate substrate in the synthesis of ABO blood group antigens. H antigen is essential for maturation of the glomerular layer of the main olfactory bulb, in cell migration and early cell-cell contacts during tumor associated angiogenesis. Preferentially fucosylates soluble lactose and to a lesser extent fucosylates glycolipids gangliosides GA1 and GM1a. The chain is Galactoside alpha-(1,2)-fucosyltransferase 1 from Saimiri sciureus (Common squirrel monkey).